The primary structure comprises 195 residues: ATP-dependent Clp protease proteolytic subunit (195 aa).

S98 acts as the Nucleophile in catalysis. H123 is a catalytic residue.

It belongs to the peptidase S14 family. Fourteen ClpP subunits assemble into 2 heptameric rings which stack back to back to give a disk-like structure with a central cavity, resembling the structure of eukaryotic proteasomes.

The protein resides in the cytoplasm. The enzyme catalyses Hydrolysis of proteins to small peptides in the presence of ATP and magnesium. alpha-casein is the usual test substrate. In the absence of ATP, only oligopeptides shorter than five residues are hydrolyzed (such as succinyl-Leu-Tyr-|-NHMec, and Leu-Tyr-Leu-|-Tyr-Trp, in which cleavage of the -Tyr-|-Leu- and -Tyr-|-Trp bonds also occurs).. Functionally, cleaves peptides in various proteins in a process that requires ATP hydrolysis. Has a chymotrypsin-like activity. Plays a major role in the degradation of misfolded proteins. The polypeptide is ATP-dependent Clp protease proteolytic subunit (Staphylococcus aureus (strain Mu3 / ATCC 700698)).